A 180-amino-acid chain; its full sequence is Ferric nitrobindin-like protein (180 aa).

Positions 21–27 match the GXWXGXG motif; the sequence is GRWEGAG.

It belongs to the nitrobindin family.

The chain is Ferric nitrobindin-like protein from Kineococcus radiotolerans (strain ATCC BAA-149 / DSM 14245 / SRS30216).